The sequence spans 227 residues: YEATS domain-containing protein 4 (227 aa).

One can recognise a YEATS domain in the interval 15–158; sequence RVKGVTIVKP…AMMQQLLTTS (144 aa). K37 participates in a covalent cross-link: Glycyl lysine isopeptide (Lys-Gly) (interchain with G-Cter in SUMO2). Residues 93–97 are diacetylated histone H3 binding; that stretch reads WGEFE. Residues 163–227 form an interaction with MLLT10 region; the sequence is LGAYKHETEF…LEEDDQTKDI (65 aa). An interaction with TACC1 region spans residues 168–227; it reads HETEFAELEVKTREKLEAAKKKTSFEIAELKERLKASRETINCLKNEIRKLEEDDQTKDI. Residues 178 to 226 adopt a coiled-coil conformation; sequence KTREKLEAAKKKTSFEIAELKERLKASRETINCLKNEIRKLEEDDQTKD.

Component of numerous complexes with chromatin remodeling and histone acetyltransferase activity. Component of the NuA4 histone acetyltransferase complex which contains the catalytic subunit KAT5/TIP60 and the subunits EP400, TRRAP/PAF400, BRD8/SMAP, EPC1, DMAP1/DNMAP1, RUVBL1/TIP49, RUVBL2, ING3, actin, ACTL6A/BAF53A, MORF4L1/MRG15, MORF4L2/MRGX, MRGBP, YEATS4/GAS41, VPS72/YL1 and MEAF6. The NuA4 complex interacts with MYC and the adenovirus E1A protein. Component of a NuA4-related complex which contains EP400, TRRAP/PAF400, SRCAP, BRD8/SMAP, EPC1, DMAP1/DNMAP1, RUVBL1/TIP49, RUVBL2, actin, ACTL6A/BAF53A, VPS72 and YEATS4/GAS41. Interacts with MLLT10/AF10. Also interacts with the SWI/SNF component SMARCB1/BAF47, TACC1 and TACC2, and the nuclear matrix protein NUMA1.

It is found in the nucleus. Chromatin reader component of the NuA4 histone acetyltransferase (HAT) complex, a complex involved in transcriptional activation of select genes principally by acetylation of nucleosomal histones H4 and H2A. Specifically recognizes and binds acylated histone H3, with a preference for histone H3 diacetylated at 'Lys-18' and 'Lys-27' (H3K18ac and H3K27ac) or histone H3 diacetylated at 'Lys-14' and 'Lys-27' (H3K14ac and H3K27ac). Also able to recognize and bind crotonylated histone H3. May also recognize and bind histone H3 succinylated at 'Lys-122' (H3K122succ); additional evidences are however required to confirm this result in vivo. Plays a key role in histone variant H2AZ1/H2A.Z deposition into specific chromatin regions: recognizes and binds H3K14ac and H3K27ac on the promoters of actively transcribed genes and recruits NuA4-related complex to deposit H2AZ1/H2A.Z. H2AZ1/H2A.Z deposition is required for maintenance of embryonic stem cell. In Mus musculus (Mouse), this protein is YEATS domain-containing protein 4.